Consider the following 409-residue polypeptide: Probable plastid-lipid-associated protein 12, chloroplastic (409 aa).

The transit peptide at 1-55 directs the protein to the chloroplast; it reads MVAVRFYAVEMSLPCLCPCPSSPISLSLCSPRFNLLNTTSRRLGLSRNCRTLRIS.

The protein belongs to the PAP/fibrillin family.

The protein resides in the plastid. It is found in the chloroplast thylakoid. The protein is Probable plastid-lipid-associated protein 12, chloroplastic (PAP12) of Arabidopsis thaliana (Mouse-ear cress).